We begin with the raw amino-acid sequence, 188 residues long: Large ribosomal subunit protein eL18B (188 aa).

Positions 153 to 188 (GKAPGTPHSRTKPYVLSKGRKFERARGRRASRGYKN) are disordered. Positions 178–188 (RGRRASRGYKN) are enriched in basic residues.

It belongs to the eukaryotic ribosomal protein eL18 family. Component of the large ribosomal subunit.

Its subcellular location is the cytoplasm. It is found in the cytosol. It localises to the rough endoplasmic reticulum. Its function is as follows. Component of the large ribosomal subunit. The ribosome is a large ribonucleoprotein complex responsible for the synthesis of proteins in the cell. This is Large ribosomal subunit protein eL18B (rpl18-b) from Xenopus laevis (African clawed frog).